A 176-amino-acid polypeptide reads, in one-letter code: HTH-type transcriptional regulator DctR (176 aa).

Positions 109-174 (VPEAAVSLSR…ELVRHQHIDY (66 aa)) constitute an HTH luxR-type domain. Positions 133–152 (TEDILEKLKISLKTFYCHKH) form a DNA-binding region, H-T-H motif.

Its function is as follows. May act as a transcriptional regulator of dctA. The chain is HTH-type transcriptional regulator DctR (dctR) from Escherichia coli (strain K12).